Here is a 180-residue protein sequence, read N- to C-terminus: MNDKLALIKSSIKSIPNHPKEGIIFRDITSLLEVPAAFQTVVDLFVTRYKEKGITKVLGTESRGFIFGAPVALALNVPFVLVRKPGKLPRETISQTYQLEYGQDTLEIHTDAIHAQDKVLIIDDLLATGGTVEATVKLVQRLGGDVQDAAFVINLPDLGGEARLNALGIDAYTLVDFAGH.

The protein belongs to the purine/pyrimidine phosphoribosyltransferase family. In terms of assembly, homodimer.

The protein resides in the cytoplasm. It catalyses the reaction AMP + diphosphate = 5-phospho-alpha-D-ribose 1-diphosphate + adenine. It participates in purine metabolism; AMP biosynthesis via salvage pathway; AMP from adenine: step 1/1. Its function is as follows. Catalyzes a salvage reaction resulting in the formation of AMP, that is energically less costly than de novo synthesis. In Pasteurella multocida (strain Pm70), this protein is Adenine phosphoribosyltransferase.